The sequence spans 141 residues: ATP synthase epsilon chain (141 aa).

The protein belongs to the ATPase epsilon chain family. As to quaternary structure, F-type ATPases have 2 components, CF(1) - the catalytic core - and CF(0) - the membrane proton channel. CF(1) has five subunits: alpha(3), beta(3), gamma(1), delta(1), epsilon(1). CF(0) has three main subunits: a, b and c.

Its subcellular location is the cell inner membrane. Its function is as follows. Produces ATP from ADP in the presence of a proton gradient across the membrane. The polypeptide is ATP synthase epsilon chain (Burkholderia thailandensis (strain ATCC 700388 / DSM 13276 / CCUG 48851 / CIP 106301 / E264)).